Consider the following 86-residue polypeptide: Small ribosomal subunit protein bS20 (86 aa).

This sequence belongs to the bacterial ribosomal protein bS20 family.

Its function is as follows. Binds directly to 16S ribosomal RNA. The protein is Small ribosomal subunit protein bS20 of Rhodococcus opacus (strain B4).